A 632-amino-acid polypeptide reads, in one-letter code: PTS system mannitol-specific EIICBA component (632 aa).

The 330-residue stretch at 12-341 (FGRFLSNMIM…ILLKYDFNTI (330 aa)) folds into the PTS EIIC type-2 domain. Helical transmembrane passes span 24-45 (ISIFIAWGMMNALFMPLGWQPN), 50-70 (QLISPMIFYLLPILIGYTGGS), 134-155 (SLAILGILLAIISFFTIGPFIE), 165-185 (IQIILSYNLLPLTSIIIEPAK), 273-292 (LILGGMSGIFILVLLHGGLI), and 313-334 (FSNIISVACSFLVSFISSSILL). The 96-residue stretch at 374–469 (KTIIVACDAG…KLVENMVFLY (96 aa)) folds into the PTS EIIB type-2 domain. Catalysis depends on cysteine 380, which acts as the Phosphocysteine intermediate; for EIIB activity. Cysteine 380 is subject to Phosphocysteine; by EIIA. The PTS EIIA type-2 domain occupies 488 to 630 (FQLNEENIIL…KEALSLLTME (143 aa)). Histidine 548 acts as the Tele-phosphohistidine intermediate; for EIIA activity in catalysis. Position 548 is a phosphohistidine; by HPr (histidine 548).

Homodimer. Post-translationally, an intramolecular phosphotransfer takes places between His-548 and Cys-380.

The protein resides in the cell inner membrane. The enzyme catalyses D-mannitol(out) + N(pros)-phospho-L-histidyl-[protein] = D-mannitol 1-phosphate(in) + L-histidyl-[protein]. Its function is as follows. The phosphoenolpyruvate-dependent sugar phosphotransferase system (sugar PTS), a major carbohydrate active transport system, catalyzes the phosphorylation of incoming sugar substrates concomitantly with their translocation across the cell membrane. This system is involved in D-mannitol transport. The polypeptide is PTS system mannitol-specific EIICBA component (mtlA) (Buchnera aphidicola subsp. Acyrthosiphon pisum (strain APS) (Acyrthosiphon pisum symbiotic bacterium)).